The sequence spans 446 residues: B3 domain-containing protein REM12 (446 aa).

Positions 1–46 (MVLNSSDLGPSRCDIRDLPAPSSTNDQGKTELARKKKVKRSNTEIE) are disordered. 2 DNA-binding regions (TF-B3) span residues 56 to 153 (CFVA…FCST) and 193 to 289 (FMTL…VNTQ). Residues 295 to 334 (SQQGECSRDSEKESSICAEPSRGNKKWKATNNRKERRDSS) form a disordered region. The segment at residues 341–435 (YVTLTLTPED…TTPVFKFCSN (95 aa)) is a DNA-binding region (TF-B3 3).

The protein resides in the nucleus. This Arabidopsis thaliana (Mouse-ear cress) protein is B3 domain-containing protein REM12 (REM12).